The primary structure comprises 481 residues: MELRNKKLTHDEFMTERQQVLKTWETGKDVENFEDGVKYQQTIPEHKRFSLALLKADKEGKTLSQPRAGVALMDEHIELLKTLQEECDLLPSTIDAYTRLNRYEEAAVGIKKSIEAGTSKLNGLPVVNHGVAACRRLTETLQKPLQIRHGTPDARLLAEISMASGFTSYEGGGISYNIPYAKRVTLEKSIRDWQYCDRLMGMYEEHGIRINREPFGPLTGTLIPPFISHSIAIIEGLLALEQGVKSITVGYGQVGSLTQDVAAIQSLRELAHEYFQSYGYTDYELSTVFHQWMGGFPEDESKAFAIISWGAAVAGMSGATKVITKSPHEAWGIPTAAANIQGLKASRQMLNMVNEQKFPPCPAVELEIELIKSEVRAVLNKVFELGNGDIARGTVLAFEAGVLDVPFAPAACNAGKILPVRDNTGAIRVLEAGAVPLPKDILDLHHDYVAERARCEGRQPTFQMVVDDINAVSHSKLIGRP.

R67 provides a ligand contact to L-glutamate. G69 contacts adenosylcob(III)alamin. R99 lines the L-glutamate pocket. N122 is an adenosylcob(III)alamin binding site. Residues 148–149 (RH), E170, and Y176 each bind L-glutamate. P179 is an adenosylcob(III)alamin binding site. An L-glutamate-binding site is contributed by Y180. 4 residues coordinate adenosylcob(III)alamin: F296, K325, E329, and I333.

Belongs to the methylaspartate mutase GlmE subunit family. As to quaternary structure, heterotetramer composed of 2 epsilon subunits (GlmE) and 2 sigma subunits (GlmS). GlmE exists as a homodimer and GlmS as a monomer. The cofactor is adenosylcob(III)alamin.

The catalysed reaction is (2S,3S)-3-methyl-L-aspartate = L-glutamate. It participates in amino-acid degradation; L-glutamate degradation via mesaconate pathway; acetate and pyruvate from L-glutamate: step 1/4. Catalyzes the carbon skeleton rearrangement of L-glutamate to L-threo-3-methylaspartate ((2S,3S)-3-methylaspartate). In Escherichia coli O157:H7, this protein is Glutamate mutase epsilon subunit.